The primary structure comprises 417 residues: Serine hydroxymethyltransferase (417 aa).

(6S)-5,6,7,8-tetrahydrofolate-binding positions include Leu-122 and 126 to 128; that span reads GHL. Position 230 is an N6-(pyridoxal phosphate)lysine (Lys-230). Residue 355–357 participates in (6S)-5,6,7,8-tetrahydrofolate binding; the sequence is SPF.

Belongs to the SHMT family. As to quaternary structure, homodimer. The cofactor is pyridoxal 5'-phosphate.

The protein resides in the cytoplasm. It catalyses the reaction (6R)-5,10-methylene-5,6,7,8-tetrahydrofolate + glycine + H2O = (6S)-5,6,7,8-tetrahydrofolate + L-serine. Its pathway is one-carbon metabolism; tetrahydrofolate interconversion. The protein operates within amino-acid biosynthesis; glycine biosynthesis; glycine from L-serine: step 1/1. Catalyzes the reversible interconversion of serine and glycine with tetrahydrofolate (THF) serving as the one-carbon carrier. This reaction serves as the major source of one-carbon groups required for the biosynthesis of purines, thymidylate, methionine, and other important biomolecules. Also exhibits THF-independent aldolase activity toward beta-hydroxyamino acids, producing glycine and aldehydes, via a retro-aldol mechanism. The protein is Serine hydroxymethyltransferase of Francisella tularensis subsp. mediasiatica (strain FSC147).